The chain runs to 130 residues: Osteocrin (130 aa).

An N-terminal signal peptide occupies residues 1 to 25 (MLDWRLASTHFILAMIVMLWGSGKA). Position 129 is an arginine amide (R129).

Belongs to the Osteocrin family. In terms of assembly, interacts with NPR3. In terms of tissue distribution, expressed in skeletal muscle and to a much lesser extent in bone, brown adipose tissue, spleen and testis. Not expressed in neurons.

The protein localises to the secreted. Functionally, hormone that acts as a ligand for natriuretic peptide receptor NPR3/NPR-C and promotes bone growth and physical endurance in muscle. Acts as a regulator of osteoblast differentiation and bone growth by binding to natriuretic peptide receptor NPR3/NPR-C, thereby preventing binding between NPR3/NPR-C and natriuretic peptides, leading to increase cGMP production. Required to enhance physical endurance: induced following physical exercise in muscle and promotes cGMP production, probably by interacting with NPR3/NPR-C. May act as an autocrine and paracrine factor linked to glucose metabolism in skeletal muscle. The sequence is that of Osteocrin from Mus musculus (Mouse).